Here is a 159-residue protein sequence, read N- to C-terminus: Small ribosomal subunit protein uS5c (159 aa).

In terms of domain architecture, S5 DRBM spans 17 to 80; that stretch reads WEERVVSVQR…TDGKKNVITV (64 aa).

This sequence belongs to the universal ribosomal protein uS5 family. Part of the 30S ribosomal subunit. Contacts protein S4.

The protein resides in the plastid. The protein localises to the chloroplast. Its function is as follows. With S4 and S12 plays an important role in translational accuracy. The chain is Small ribosomal subunit protein uS5c (rps5) from Emiliania huxleyi (Coccolithophore).